A 2924-amino-acid polypeptide reads, in one-letter code: Probable polyketide synthase 6 (2924 aa).

The 432-residue stretch at 11 to 442 (EKGVAIVGIG…GSNCCLLISE (432 aa)) folds into the Ketosynthase family 3 (KS3) domain. Residues C181, H323, and H362 each act as for beta-ketoacyl synthase activity in the active site. The interval 635 to 668 (GVNPSFILGHSLGEISASYCSGMIDLDTFCYTVY) is acyl/malonyl transferase. Residue S645 is the For acyl/malonyl transferase activity of the active site. Positions 925–1047 (IDHLGLSNSY…SNFQLLDHGN (123 aa)) are N-terminal hotdog fold. Residues 925–1210 (IDHLGLSNSY…CKSLIPIKDS (286 aa)) form the PKS/mFAS DH domain. H959 (proton acceptor; for dehydratase activity) is an active-site residue. The interval 1064–1210 (NLSKLTKNEL…CKSLIPIKDS (147 aa)) is C-terminal hotdog fold. D1122 (proton donor; for dehydratase activity) is an active-site residue. Residues 2431-2508 (TGNKNIDELF…ISIKMILNSL (78 aa)) form the Carrier domain. An O-(pantetheine 4'-phosphoryl)serine modification is found at S2468. A helical transmembrane segment spans residues 2551 to 2571 (KIILLTGTTGFLGGFLLFNML).

It depends on pantetheine 4'-phosphate as a cofactor.

Its subcellular location is the membrane. In terms of biological role, probable polyketide synthase. The protein is Probable polyketide synthase 6 (pks6) of Dictyostelium discoideum (Social amoeba).